We begin with the raw amino-acid sequence, 280 residues long: Soluble inorganic pyrophosphatase 1, chloroplastic (280 aa).

Residue R120 coordinates diphosphate. Mg(2+) is bound by residues D152, D157, and D189.

In terms of assembly, monomer. It depends on Mg(2+) as a cofactor. In terms of processing, the N-terminus is blocked.

It is found in the plastid. It localises to the chloroplast. It catalyses the reaction diphosphate + H2O = 2 phosphate + H(+). This chain is Soluble inorganic pyrophosphatase 1, chloroplastic (ppa1), found in Chlamydomonas reinhardtii (Chlamydomonas smithii).